Reading from the N-terminus, the 113-residue chain is uncharacterized protein (113 aa).

This is an uncharacterized protein from Listeria innocua serovar 6a (strain ATCC BAA-680 / CLIP 11262).